The primary structure comprises 32 residues: Delta-conotoxin-like CnVIC (32 aa).

Cystine bridges form between Cys-3-Cys-18, Cys-10-Cys-22, and Cys-17-Cys-27. Residues Pro-6 and Pro-14 each carry the 4-hydroxyproline modification.

It belongs to the conotoxin O1 superfamily. Expressed by the venom duct.

Its subcellular location is the secreted. Functionally, delta-conotoxins bind to site 6 of voltage-gated sodium channels (Nav) and inhibit the inactivation process. This toxin acts on Nav1.2/SCN2A, Nav1.4/SCN4A, Nav1.5/SCN5A (weak activity), Nav1.6/SCN8A (EC(50)=2.5 uM). In Conus consors (Singed cone), this protein is Delta-conotoxin-like CnVIC.